Consider the following 130-residue polypeptide: Small ribosomal subunit protein uS11c (130 aa).

The protein belongs to the universal ribosomal protein uS11 family. In terms of assembly, part of the 30S ribosomal subunit.

Its subcellular location is the plastid. It is found in the chloroplast. The sequence is that of Small ribosomal subunit protein uS11c from Cycas taitungensis (Prince sago).